A 261-amino-acid polypeptide reads, in one-letter code: Cytochrome c oxidase subunit 3 (261 aa).

Over 1-15 the chain is Mitochondrial matrix; it reads MTHQTHAYHMVNPSP. The helical transmembrane segment at 16-34 threads the bilayer; it reads WPLTGALSALLMTSGLIMW. The Mitochondrial intermembrane segment spans residues 35–40; the sequence is FHFNST. Residues 41–66 form a helical membrane-spanning segment; sequence TLLMLGLTTNMLTMYQWWRDVVREST. Residues 67–72 are Mitochondrial matrix-facing; the sequence is FQGHHT. A helical membrane pass occupies residues 73–105; that stretch reads PNVQKGLRYGMILFIISEVLFFTGFFWAFYHSS. At 106–128 the chain is on the mitochondrial intermembrane side; sequence LAPTPELGGCWPPTGIHPLNPLE. Residues 129-152 traverse the membrane as a helical segment; sequence VPLLNTSVLLASGVSITWAHHSLM. Residues 153-155 are Mitochondrial matrix-facing; the sequence is EGN. The helical transmembrane segment at 156–183 threads the bilayer; the sequence is RNHMLQALFITIALGVYFTLLQASEYYE. Residues 184 to 190 lie on the Mitochondrial intermembrane side of the membrane; the sequence is APFTISD. The helical transmembrane segment at 191–223 threads the bilayer; the sequence is GVYGSTFFVATGFHGLHVIIGSTFLIVCFFRQL. Topologically, residues 224–232 are mitochondrial matrix; it reads KFHFTSSHH. A helical membrane pass occupies residues 233–256; that stretch reads FGFEAAAWYWHFVDVVWLFLYVSI. Topologically, residues 257–261 are mitochondrial intermembrane; sequence YWWGS.

Belongs to the cytochrome c oxidase subunit 3 family. In terms of assembly, component of the cytochrome c oxidase (complex IV, CIV), a multisubunit enzyme composed of 14 subunits. The complex is composed of a catalytic core of 3 subunits MT-CO1, MT-CO2 and MT-CO3, encoded in the mitochondrial DNA, and 11 supernumerary subunits COX4I, COX5A, COX5B, COX6A, COX6B, COX6C, COX7A, COX7B, COX7C, COX8 and NDUFA4, which are encoded in the nuclear genome. The complex exists as a monomer or a dimer and forms supercomplexes (SCs) in the inner mitochondrial membrane with NADH-ubiquinone oxidoreductase (complex I, CI) and ubiquinol-cytochrome c oxidoreductase (cytochrome b-c1 complex, complex III, CIII), resulting in different assemblies (supercomplex SCI(1)III(2)IV(1) and megacomplex MCI(2)III(2)IV(2)).

It is found in the mitochondrion inner membrane. The catalysed reaction is 4 Fe(II)-[cytochrome c] + O2 + 8 H(+)(in) = 4 Fe(III)-[cytochrome c] + 2 H2O + 4 H(+)(out). In terms of biological role, component of the cytochrome c oxidase, the last enzyme in the mitochondrial electron transport chain which drives oxidative phosphorylation. The respiratory chain contains 3 multisubunit complexes succinate dehydrogenase (complex II, CII), ubiquinol-cytochrome c oxidoreductase (cytochrome b-c1 complex, complex III, CIII) and cytochrome c oxidase (complex IV, CIV), that cooperate to transfer electrons derived from NADH and succinate to molecular oxygen, creating an electrochemical gradient over the inner membrane that drives transmembrane transport and the ATP synthase. Cytochrome c oxidase is the component of the respiratory chain that catalyzes the reduction of oxygen to water. Electrons originating from reduced cytochrome c in the intermembrane space (IMS) are transferred via the dinuclear copper A center (CU(A)) of subunit 2 and heme A of subunit 1 to the active site in subunit 1, a binuclear center (BNC) formed by heme A3 and copper B (CU(B)). The BNC reduces molecular oxygen to 2 water molecules using 4 electrons from cytochrome c in the IMS and 4 protons from the mitochondrial matrix. The protein is Cytochrome c oxidase subunit 3 (MT-CO3) of Gazella spekei (Speke's gazelle).